Reading from the N-terminus, the 198-residue chain is Fe/S biogenesis protein NfuA (198 aa).

The [4Fe-4S] cluster site is built by Cys155 and Cys158.

The protein belongs to the NfuA family. Homodimer. [4Fe-4S] cluster serves as cofactor.

Functionally, involved in iron-sulfur cluster biogenesis. Binds a 4Fe-4S cluster, can transfer this cluster to apoproteins, and thereby intervenes in the maturation of Fe/S proteins. Could also act as a scaffold/chaperone for damaged Fe/S proteins. The sequence is that of Fe/S biogenesis protein NfuA from Haemophilus influenzae (strain 86-028NP).